We begin with the raw amino-acid sequence, 1183 residues long: Spermatogenesis-associated protein 31G1 (1183 aa).

Disordered stretches follow at residues Thr-109–Phe-153, Leu-469–Ala-555, Thr-661–Pro-686, Ala-843–Val-884, Cys-973–Leu-1032, and Gln-1048–Ala-1087. A compositionally biased stretch (basic and acidic residues) spans Cys-124–Glu-134. The span at Thr-135–Phe-153 shows a compositional bias: polar residues. Over residues Asn-487–His-509 the composition is skewed to basic and acidic residues. A compositionally biased stretch (polar residues) spans Thr-671–Glu-685. Positions Pro-847–Thr-858 are enriched in pro residues. The segment covering His-975–Ala-984 has biased composition (polar residues). The segment covering Gln-993–Ala-1002 has biased composition (basic residues). Residues Ser-1069 to Ala-1079 are compositionally biased toward polar residues.

As to expression, expressed in kidney and testis. Expressed at lower levels in stomach, intestine, epididymis and ovary. Expressed at very low levels in heart and spleen.

Its function is as follows. Dispensable for normal development and fertility. This Mus musculus (Mouse) protein is Spermatogenesis-associated protein 31G1 (Spata31g1).